A 685-amino-acid chain; its full sequence is Amino acid transporter heavy chain SLC3A1 (685 aa).

The segment covering 1-10 (MDEDKGKRDP) has biased composition (basic and acidic residues). The interval 1-53 (MDEDKGKRDPIQMSLKGCRTNNGFVQNEDIPEQDPDPGSRDTPQPNAVSIPAP) is disordered. Over 1 to 88 (MDEDKGKRDP…ARYRVPREIL (88 aa)) the chain is Cytoplasmic. Residues 89-109 (FWLTVVSVFLLIGATIAIIVI) traverse the membrane as a helical; Signal-anchor for type II membrane protein segment. The Extracellular segment spans residues 110–685 (SPKCLDWWQA…SALDILYSSC (576 aa)). Position 213 (Asn-213) interacts with Ca(2+). N-linked (GlcNAc...) asparagine glycans are attached at residues Asn-213, Asn-240, and Asn-260. Cys-241 and Cys-272 are disulfide-bonded. Asp-283, Phe-317, Leu-318, and Glu-320 together coordinate Ca(2+). An N-linked (GlcNAc...) asparagine glycan is attached at Asn-331. Ser-385 is subject to Phosphoserine. N-linked (GlcNAc...) asparagine glycosylation is found at Asn-512 and Asn-522. Disulfide bonds link Cys-570–Cys-666 and Cys-673–Cys-685.

Disulfide-linked heterodimer composed of the catalytic light subunit SLC7A9 and the heavy subunit SLC3A1. The heterodimer is the minimal functional unit. Assembles in non-covalently linked heterotetramers (dimers of heterodimers) and higher order oligomers; the oligomerization is mediated by SLC3A1 likely to prevent degradation in the endoplasmic reticulum and facilitate heteromer trafficking to the plasma membrane. Disulfide-linked heterodimer composed of the catalytic light subunit SLC7A13 and the heavy subunit SLC3A1. Expressed in the brush border membrane in the kidney (at protein level). Highly expressed in renal tubules in the outer stripe of the outer medulla and medullary ray (at protein level). Also detected in the renal cortex. More abundant in male than female kidneys.

Its subcellular location is the cell membrane. It localises to the apical cell membrane. Acts as a chaperone that facilitates biogenesis and trafficking of functional transporter heteromers to the plasma membrane. Associates with SLC7A9 to form a functional transporter complex that mediates the electrogenic exchange between cationic amino acids and neutral amino acids, with a stoichiometry of 1:1. SLC7A9-SLC3A1 transporter has system b(0,+)-like activity with high affinity for extracellular cationic amino acids and L-cystine and lower affinity for intracellular neutral amino acids. Substrate exchange is driven by high concentration of intracellular neutral amino acids and the intracellular reduction of L-cystine to L-cysteine. SLC7A9-SLC3A1 acts as a major transporter for reabsorption of L-cystine and dibasic amino acids across the brush border membrane in early proximal tubules. Associates with SLC7A13 to form a functional complex that transports anionic and neutral amino acids via exchange or facilitated diffusion. SLC7A13-SLC3A1 may act as a major transporter for L-cystine in late proximal tubules, ensuring its reabsorption from the luminal fluid in exchange for cytosolic L-glutamate or L-aspartate. The chain is Amino acid transporter heavy chain SLC3A1 from Mus musculus (Mouse).